The sequence spans 512 residues: Histidine ammonia-lyase (512 aa).

The segment at residues Ala145–Gly147 is a cross-link (5-imidazolinone (Ala-Gly)). Ser146 is modified (2,3-didehydroalanine (Ser)).

Belongs to the PAL/histidase family. In terms of processing, contains an active site 4-methylidene-imidazol-5-one (MIO), which is formed autocatalytically by cyclization and dehydration of residues Ala-Ser-Gly.

Its subcellular location is the cytoplasm. The catalysed reaction is L-histidine = trans-urocanate + NH4(+). It participates in amino-acid degradation; L-histidine degradation into L-glutamate; N-formimidoyl-L-glutamate from L-histidine: step 1/3. The protein is Histidine ammonia-lyase of Pseudomonas fluorescens (strain SBW25).